The chain runs to 271 residues: Putative phosphoenolpyruvate synthase regulatory protein (271 aa).

151-158 (GVSRSGKT) lines the ADP pocket.

Belongs to the pyruvate, phosphate/water dikinase regulatory protein family. PSRP subfamily.

The catalysed reaction is [pyruvate, water dikinase] + ADP = [pyruvate, water dikinase]-phosphate + AMP + H(+). The enzyme catalyses [pyruvate, water dikinase]-phosphate + phosphate + H(+) = [pyruvate, water dikinase] + diphosphate. In terms of biological role, bifunctional serine/threonine kinase and phosphorylase involved in the regulation of the phosphoenolpyruvate synthase (PEPS) by catalyzing its phosphorylation/dephosphorylation. The sequence is that of Putative phosphoenolpyruvate synthase regulatory protein from Burkholderia lata (strain ATCC 17760 / DSM 23089 / LMG 22485 / NCIMB 9086 / R18194 / 383).